A 425-amino-acid polypeptide reads, in one-letter code: Protein CLP1 homolog (425 aa).

Residues Glu-18, Lys-59, and 121-126 (DVGKST) contribute to the ATP site.

This sequence belongs to the Clp1 family. Clp1 subfamily.

The protein resides in the nucleus. Its function is as follows. Required for endonucleolytic cleavage during polyadenylation-dependent pre-mRNA 3'-end formation. The chain is Protein CLP1 homolog (cbc) from Drosophila mojavensis (Fruit fly).